The chain runs to 643 residues: Translation factor GUF1, mitochondrial (643 aa).

The transit peptide at 1–18 directs the protein to the mitochondrion; the sequence is MLASQAIKRIFHRSWKPL. In terms of domain architecture, tr-type G spans 43–226; the sequence is ENYRNFSIVA…AIIDRIPPPT (184 aa). Residues 52–59, 118–122, and 172–175 contribute to the GTP site; these read AHIDHGKS, DTPGH, and NKID.

This sequence belongs to the TRAFAC class translation factor GTPase superfamily. Classic translation factor GTPase family. LepA subfamily.

The protein localises to the mitochondrion inner membrane. It carries out the reaction GTP + H2O = GDP + phosphate + H(+). In terms of biological role, promotes mitochondrial protein synthesis. May act as a fidelity factor of the translation reaction, by catalyzing a one-codon backward translocation of tRNAs on improperly translocated ribosomes. Binds to mitochondrial ribosomes in a GTP-dependent manner. The polypeptide is Translation factor GUF1, mitochondrial (Zygosaccharomyces rouxii (strain ATCC 2623 / CBS 732 / NBRC 1130 / NCYC 568 / NRRL Y-229)).